The chain runs to 50 residues: Small ribosomal subunit protein eS31 (50 aa).

Residues cysteine 22, cysteine 25, cysteine 40, and cysteine 43 each coordinate Zn(2+). The C4-type zinc finger occupies 22 to 43 (CPRCGPGVFMADHGDRWACGKC).

Belongs to the eukaryotic ribosomal protein eS31 family. In terms of assembly, part of the 30S ribosomal subunit. It depends on Zn(2+) as a cofactor.

The protein is Small ribosomal subunit protein eS31 of Pyrococcus horikoshii (strain ATCC 700860 / DSM 12428 / JCM 9974 / NBRC 100139 / OT-3).